Consider the following 385-residue polypeptide: MSSVNANGGYTKPQKYVPGPGDPELPPQLSEFKDKTSDEILKEMNRMPFFMTKLDETDGAGGENVELEALKALAYEGEPHEIAENFKKQGNELYKAKRFKDARELYSKGLAVECEDKSINESLYANRAACELELKNYRRCIEDCSKALTINPKNVKCYYRTSKAFFQLNKLEEAKSAATFANQRIDPENKSILNMLSVIDRKEQELKAKEEKQQREAQERENKKIMLESAMTLRNITNIKTHSPVELLNEGKIRLEDPMDFESQLIYPALIMYPTQDEFDFVGEVSELTTVQELVDLVLEGPQERFKKEGKENFTPKKVLVFMETKAGGLIKAGKKLTFHDILKKESPDVPLFDNALKIYIVPKVESEGWISKWDKQKALERRSV.

The disordered stretch occupies residues 1 to 37 (MSSVNANGGYTKPQKYVPGPGDPELPPQLSEFKDKTS). TPR repeat units lie at residues 83 to 116 (AENF…ECED), 121 to 154 (ESLY…NPKN), and 155 to 189 (VKCY…DPEN).

The protein belongs to the TTC4 family. As to quaternary structure, monomer. Component of Hsp70 and Hsp90 chaperone complexes. Interacts (via TPR repeats) with HSC82 and HSP82 (via C-terminal MEEVD pentapeptide). Interacts with CPR7, SSA1 and SPI1.

The protein localises to the cytoplasm. In terms of biological role, co-chaperone that binds to the molecular chaperones Hsp90 (HSC82 and HSP82) and Hsp70 (SSA1). Stimulates SSA1 ATPase activity, but not Hsp90 ATPase activity. Involved in only a subset of Hsp90 functions. This chain is Hsp70/Hsp90 co-chaperone CNS1 (CNS1), found in Saccharomyces cerevisiae (strain ATCC 204508 / S288c) (Baker's yeast).